A 172-amino-acid polypeptide reads, in one-letter code: Putative F-box protein At3g13825 (172 aa).

The F-box domain maps to 1–51; the sequence is MTTLSNLSVDLVGEIFSRVPLISLSEVRCTCTTWNTLSWNILSENYVFGKA.

This Arabidopsis thaliana (Mouse-ear cress) protein is Putative F-box protein At3g13825.